The primary structure comprises 85 residues: Small ribosomal subunit protein bS18c (85 aa).

The protein belongs to the bacterial ribosomal protein bS18 family. As to quaternary structure, part of the 30S ribosomal subunit.

The protein resides in the plastid. It is found in the chloroplast. In Zygnema circumcarinatum (Green alga), this protein is Small ribosomal subunit protein bS18c.